The following is a 292-amino-acid chain: Large ribosomal subunit protein bL19m (292 aa).

Positions 41-60 (SRFQSTGPSEPGGFKPPPKP) are disordered. Serine 77 bears the Phosphoserine mark.

Belongs to the bacterial ribosomal protein bL19 family. In terms of assembly, component of the mitochondrial ribosome large subunit (39S) which comprises a 16S rRNA and about 50 distinct proteins.

The protein resides in the mitochondrion. This Mus musculus (Mouse) protein is Large ribosomal subunit protein bL19m (Mrpl19).